The sequence spans 312 residues: Malate dehydrogenase (312 aa).

NAD(+)-binding positions include 12 to 17 and aspartate 36; that span reads GAGFTG. Substrate contacts are provided by arginine 87 and arginine 93. NAD(+)-binding positions include asparagine 100 and 123–125; that span reads LTN. Asparagine 125 is a substrate binding site. Serine 149 bears the Phosphoserine mark. Position 156 (arginine 156) interacts with substrate. Histidine 180 serves as the catalytic Proton acceptor.

The protein belongs to the LDH/MDH superfamily. MDH type 3 family. As to quaternary structure, homotetramer.

It catalyses the reaction (S)-malate + NAD(+) = oxaloacetate + NADH + H(+). Its function is as follows. Catalyzes the reversible oxidation of malate to oxaloacetate. The chain is Malate dehydrogenase from Bacillus israeli.